The chain runs to 71 residues: Exodeoxyribonuclease 7 small subunit (71 aa).

Belongs to the XseB family. In terms of assembly, heterooligomer composed of large and small subunits.

Its subcellular location is the cytoplasm. It catalyses the reaction Exonucleolytic cleavage in either 5'- to 3'- or 3'- to 5'-direction to yield nucleoside 5'-phosphates.. Bidirectionally degrades single-stranded DNA into large acid-insoluble oligonucleotides, which are then degraded further into small acid-soluble oligonucleotides. The sequence is that of Exodeoxyribonuclease 7 small subunit from Streptococcus thermophilus (strain ATCC BAA-250 / LMG 18311).